Reading from the N-terminus, the 293-residue chain is GDT1-like protein 3 (293 aa).

The N-terminal stretch at 1–25 is a signal peptide; sequence MGLISNPTRLILVATIFFLVSSISG. 6 consecutive transmembrane segments (helical) span residues 89-109, 115-135, 148-168, 200-220, 238-258, and 272-292; these read FSMI…ALMA, ATVL…STGL, TNSA…YIAW, LFSR…FLAE, AIGV…LAVV, and VATV…FYPP.

Belongs to the GDT1 family.

Its subcellular location is the membrane. This chain is GDT1-like protein 3, found in Arabidopsis thaliana (Mouse-ear cress).